The sequence spans 221 residues: GTP-binding nuclear protein Ran2 (221 aa).

A Small GTPase Ran-type domain is found at 10 to 174 (DYPSFKLVIV…LYLARKLAGD (165 aa)). 21 to 28 (DGGTGKTT) is a GTP binding site. Residues 40–48 (KKYEPTIGV) are switch-I. Residues G71, 125–128 (NKVD), and 153–155 (SAK) each bind GTP. The segment at 71-87 (GQEKFGGLRDGYYIHGQ) is switch-II.

This sequence belongs to the small GTPase superfamily. Ran family. As to quaternary structure, found in a nuclear export complex with RanGTP, exportin and pre-miRNA.

The protein resides in the nucleus. In terms of biological role, GTP-binding protein involved in nucleocytoplasmic transport. Required for the import of protein into the nucleus and also for RNA export. Involved in chromatin condensation and control of cell cycle. In Solanum lycopersicum (Tomato), this protein is GTP-binding nuclear protein Ran2 (RAN2).